The following is a 63-amino-acid chain: Conotoxin Pu5.4 (63 aa).

The N-terminal stretch at 1–22 is a signal peptide; it reads MRCVPVFVILLLLIASTPSVDA. Positions 23–50 are excised as a propeptide; it reads TQKTKDDMSLASFHDNAKRFLQTLRNTR. Trp-62 is modified (tryptophan amide).

It belongs to the conotoxin T superfamily. In terms of processing, contains 2 disulfide bonds that can be either 'C1-C3, C2-C4' or 'C1-C4, C2-C3', since these disulfide connectivities have been observed for conotoxins with cysteine framework V (for examples, see AC P0DQQ7 and AC P81755). In terms of tissue distribution, expressed by the venom duct.

It is found in the secreted. The chain is Conotoxin Pu5.4 from Conus pulicarius (Flea-bitten cone).